A 73-amino-acid chain; its full sequence is Signaling peptide TAXIMIN 2 (73 aa).

The first 27 residues, 1 to 27, serve as a signal peptide directing secretion; the sequence is MGDCRPLGFLIGLPFALVALVLALVGA.

Confined to the vasculature of various organs, including seedling roots, leaves, cotyledons, sepals and petals. Also accumulates in root hair cells.

Its subcellular location is the secreted. Its function is as follows. Signaling peptide involved in the regulation of lateral organs separation. This Arabidopsis thaliana (Mouse-ear cress) protein is Signaling peptide TAXIMIN 2.